Consider the following 768-residue polypeptide: Actin filament-associated protein 1-like 1 (768 aa).

Residues 82-145 are disordered; sequence DLRDMPEDDG…GKSPEYISSH (64 aa). Ser94, Ser98, Ser104, and Ser153 each carry phosphoserine. The disordered stretch occupies residues 173–211; it reads GELKSSYNDSDAMSSSYESYDEEEEEGKSPQPRHQWPSE. The segment covering 177-190 has biased composition (low complexity); that stretch reads SSYNDSDAMSSSYE. A PH 1 domain is found at 220–316; that stretch reads ECRICAFLLR…WLKVIREVSK (97 aa). 2 positions are modified to phosphoserine: Ser329 and Ser343. The PH 2 domain occupies 418–512; sequence EVPCCGYLNV…WLGLLLVEMG (95 aa). Position 557 is a phosphotyrosine (Tyr557). The segment at 566–604 is disordered; it reads QDEEPERPTGAQVKRHASSCSEKSHRVDPQVKVKRHASS. Residues 587–596 show a composition bias toward basic and acidic residues; it reads EKSHRVDPQV. A coiled-coil region spans residues 611-700; sequence GKNRAEEDAR…VAVKERLQQS (90 aa). The tract at residues 705 to 768 is disordered; sequence PALGLSVSSK…KAKEWEMKKT (64 aa). A compositionally biased stretch (polar residues) spans 710–729; the sequence is SVSSKPKSGETANKPQNSVP. The residue at position 747 (Ser747) is a Phosphoserine. Positions 759 to 768 are enriched in basic and acidic residues; it reads KAKEWEMKKT.

As to quaternary structure, interacts with CTTN. In terms of tissue distribution, expressed in breast, colon and brain. In all 3 tissues, expressed in the microvasculature (at protein level). In addition, in the breast, found in the contractile myoepithelial cell layer which surrounds the breast ducts (at protein level). In the colon, expressed in the mucous membrane and colonic crypts and in the smooth muscle cell layer which provide movement of the colon (at protein level). In the cerebellum, localized around the Purkinje neurons and the granule cells of the granular layer, but not inside cell bodies (at protein level). Outside of the cerebellar cortex, expressed in glial cells (at protein level). Highly expressed away from the cell bodies within the dentate nucleus (at protein level).

Its subcellular location is the cytoplasm. It is found in the cell projection. It localises to the podosome. The protein resides in the invadopodium. The protein localises to the cytoskeleton. Its subcellular location is the stress fiber. May be involved in podosome and invadosome formation. The polypeptide is Actin filament-associated protein 1-like 1 (AFAP1L1) (Homo sapiens (Human)).